A 194-amino-acid chain; its full sequence is 7-methyl-GTP pyrophosphatase (194 aa).

D69 acts as the Proton acceptor in catalysis.

The protein belongs to the Maf family. YceF subfamily. The cofactor is a divalent metal cation.

The protein resides in the cytoplasm. It catalyses the reaction N(7)-methyl-GTP + H2O = N(7)-methyl-GMP + diphosphate + H(+). Functionally, nucleoside triphosphate pyrophosphatase that hydrolyzes 7-methyl-GTP (m(7)GTP). May have a dual role in cell division arrest and in preventing the incorporation of modified nucleotides into cellular nucleic acids. In Shigella boydii serotype 4 (strain Sb227), this protein is 7-methyl-GTP pyrophosphatase (yceF1).